The following is a 239-amino-acid chain: 1-(5-phosphoribosyl)-5-[(5-phosphoribosylamino)methylideneamino] imidazole-4-carboxamide isomerase (239 aa).

The Proton acceptor role is filled by aspartate 8. The active-site Proton donor is aspartate 129.

It belongs to the HisA/HisF family.

It localises to the cytoplasm. The enzyme catalyses 1-(5-phospho-beta-D-ribosyl)-5-[(5-phospho-beta-D-ribosylamino)methylideneamino]imidazole-4-carboxamide = 5-[(5-phospho-1-deoxy-D-ribulos-1-ylimino)methylamino]-1-(5-phospho-beta-D-ribosyl)imidazole-4-carboxamide. It functions in the pathway amino-acid biosynthesis; L-histidine biosynthesis; L-histidine from 5-phospho-alpha-D-ribose 1-diphosphate: step 4/9. The polypeptide is 1-(5-phosphoribosyl)-5-[(5-phosphoribosylamino)methylideneamino] imidazole-4-carboxamide isomerase (Bacillus thuringiensis subsp. konkukian (strain 97-27)).